The chain runs to 316 residues: Ornithine carbamoyltransferase (316 aa).

Residues 57–60 (STRT), glutamine 84, arginine 108, and 135–138 (HPCQ) contribute to the carbamoyl phosphate site. L-ornithine-binding positions include asparagine 166, aspartate 230, and 234–235 (SM). Residues 269-270 (CL) and arginine 297 contribute to the carbamoyl phosphate site.

It belongs to the aspartate/ornithine carbamoyltransferase superfamily. OTCase family.

It is found in the cytoplasm. It carries out the reaction carbamoyl phosphate + L-ornithine = L-citrulline + phosphate + H(+). It participates in amino-acid biosynthesis; L-arginine biosynthesis; L-arginine from L-ornithine and carbamoyl phosphate: step 1/3. In terms of biological role, reversibly catalyzes the transfer of the carbamoyl group from carbamoyl phosphate (CP) to the N(epsilon) atom of ornithine (ORN) to produce L-citrulline. This Bacillus cereus (strain ATCC 14579 / DSM 31 / CCUG 7414 / JCM 2152 / NBRC 15305 / NCIMB 9373 / NCTC 2599 / NRRL B-3711) protein is Ornithine carbamoyltransferase (argF).